We begin with the raw amino-acid sequence, 188 residues long: dCTP deaminase (188 aa).

109-114 (KSTYAR) lines the dCTP pocket. Glu-135 acts as the Proton donor/acceptor in catalysis. 3 residues coordinate dCTP: Gln-154, Tyr-168, and Gln-178.

Belongs to the dCTP deaminase family. In terms of assembly, homotrimer.

It carries out the reaction dCTP + H2O + H(+) = dUTP + NH4(+). The protein operates within pyrimidine metabolism; dUMP biosynthesis; dUMP from dCTP (dUTP route): step 1/2. In terms of biological role, catalyzes the deamination of dCTP to dUTP. The polypeptide is dCTP deaminase (Helicobacter pylori (strain P12)).